Here is an 89-residue protein sequence, read N- to C-terminus: MSITVEEKNRVMTEFATKKGDTGSPEVQVAILSSRIATLTEHFKTHKKDNHSRRGLLKLVAQRRKLLDYLKGKDEARYNVLIAKLGLRR.

It belongs to the universal ribosomal protein uS15 family. As to quaternary structure, part of the 30S ribosomal subunit. Forms a bridge to the 50S subunit in the 70S ribosome, contacting the 23S rRNA.

Its function is as follows. One of the primary rRNA binding proteins, it binds directly to 16S rRNA where it helps nucleate assembly of the platform of the 30S subunit by binding and bridging several RNA helices of the 16S rRNA. Forms an intersubunit bridge (bridge B4) with the 23S rRNA of the 50S subunit in the ribosome. The chain is Small ribosomal subunit protein uS15 from Paracoccus denitrificans (strain Pd 1222).